The following is a 184-amino-acid chain: Ras-related protein Rap-1A (184 aa).

GTP is bound by residues 10–18 (GSGGVGKSA), 29–35 (VEKYDPT), glycine 60, and 116–119 (NKCD). An Effector region motif is present at residues 32–40 (YDPTIEDSY). Cysteine 181 carries the post-translational modification Cysteine methyl ester. Cysteine 181 carries the S-geranylgeranyl cysteine lipid modification. Positions 182–184 (LLL) are cleaved as a propeptide — removed in mature form.

It belongs to the small GTPase superfamily. Ras family. Found in a complex, at least composed of ITGB1BP1, KRIT1 and RAP1A. Interacts (active GTP-bound form preferentially) with KRIT1 (via C-terminus FERM domain); the interaction does not induce the opening conformation of KRIT1. Found in a complex composed of CDH1, RAP1A and PKP3; PKP3 acts as a scaffold protein within the complex, the complex is required for CDH1 localization to mature desmosome cell junctions. In its GTP-bound form interacts with PLCE1 and RADIL. Interacts with SGSM1, SGSM2 and SGSM3. Interacts (via GTP-bound active form) with RAPGEF2 (via Ras-associating domain). Interacts with TBC1D21. Interacts with RAP1GDS1.

The protein localises to the cell membrane. It is found in the cytoplasm. It localises to the perinuclear region. Its subcellular location is the cell junction. The protein resides in the early endosome. It carries out the reaction GTP + H2O = GDP + phosphate + H(+). Activated by guanine nucleotide-exchange factors (GEF) EPAC and EPAC2 in a cAMP-dependent manner, and GFR. Functionally, counteracts the mitogenic function of Ras, at least partly because it can interact with Ras GAPs and RAF in a competitive manner. Together with ITGB1BP1, regulates KRIT1 localization to microtubules and membranes. Plays a role in nerve growth factor (NGF)-induced neurite outgrowth. Plays a role in the regulation of embryonic blood vessel formation. Involved in the establishment of basal endothelial barrier function. Facilitates the progressive accumulation of CDH1 at mature desmosome junctions via cAMP-dependent signaling and its interaction with PKP3. May be involved in the regulation of the vascular endothelial growth factor receptor KDR expression at endothelial cell-cell junctions. In Bos taurus (Bovine), this protein is Ras-related protein Rap-1A (RAP1A).